The sequence spans 344 residues: tRNA N6-adenosine threonylcarbamoyltransferase (344 aa).

Positions 114 and 118 each coordinate Fe cation. Substrate-binding positions include 136–140 (LVSGG), Asp170, Gly183, Asp187, and Asn278. Position 306 (Asp306) interacts with Fe cation.

It belongs to the KAE1 / TsaD family. Fe(2+) is required as a cofactor.

The protein localises to the cytoplasm. The enzyme catalyses L-threonylcarbamoyladenylate + adenosine(37) in tRNA = N(6)-L-threonylcarbamoyladenosine(37) in tRNA + AMP + H(+). Its function is as follows. Required for the formation of a threonylcarbamoyl group on adenosine at position 37 (t(6)A37) in tRNAs that read codons beginning with adenine. Is involved in the transfer of the threonylcarbamoyl moiety of threonylcarbamoyl-AMP (TC-AMP) to the N6 group of A37, together with TsaE and TsaB. TsaD likely plays a direct catalytic role in this reaction. This chain is tRNA N6-adenosine threonylcarbamoyltransferase, found in Mycobacteroides abscessus (strain ATCC 19977 / DSM 44196 / CCUG 20993 / CIP 104536 / JCM 13569 / NCTC 13031 / TMC 1543 / L948) (Mycobacterium abscessus).